The sequence spans 502 residues: UDP-N-acetylmuramoylalanine--D-glutamate ligase (502 aa).

129 to 135 (GTNGKTT) provides a ligand contact to ATP.

Belongs to the MurCDEF family.

Its subcellular location is the cytoplasm. It catalyses the reaction UDP-N-acetyl-alpha-D-muramoyl-L-alanine + D-glutamate + ATP = UDP-N-acetyl-alpha-D-muramoyl-L-alanyl-D-glutamate + ADP + phosphate + H(+). It participates in cell wall biogenesis; peptidoglycan biosynthesis. Functionally, cell wall formation. Catalyzes the addition of glutamate to the nucleotide precursor UDP-N-acetylmuramoyl-L-alanine (UMA). The protein is UDP-N-acetylmuramoylalanine--D-glutamate ligase of Burkholderia ambifaria (strain MC40-6).